A 438-amino-acid chain; its full sequence is Histidine--tRNA ligase (438 aa).

This sequence belongs to the class-II aminoacyl-tRNA synthetase family. As to quaternary structure, homodimer.

It is found in the cytoplasm. The enzyme catalyses tRNA(His) + L-histidine + ATP = L-histidyl-tRNA(His) + AMP + diphosphate + H(+). This Thermobifida fusca (strain YX) protein is Histidine--tRNA ligase (hisS).